The chain runs to 1459 residues: DNA-binding protein RFX7 (1459 aa).

The tract at residues 1 to 27 is disordered; the sequence is MAEEQQQPPPQQLDAPQQLPLSAPNPG. Low complexity predominate over residues 12–21; the sequence is QLDAPQQLPL. Positions 108–183 form a DNA-binding region, RFX-type winged-helix; sequence AFSWIRNTLE…YCYSGLRKKA (76 aa). A PxLPxI/L motif; mediates interaction with ANKRA2 and RFXANK motif is present at residues 188–193; that stretch reads PTLPNL. 6 disordered regions span residues 303 to 347, 404 to 428, 482 to 590, 634 to 659, 688 to 716, and 918 to 1016; these read AKQQ…LPNG, SVKQ…ARHR, PSNS…GVTE, FTST…SPRK, GQKP…AQIP, and SVTP…VPPS. 2 stretches are compositionally biased toward polar residues: residues 404–416 and 482–502; these read SVKQ…QNVP and PSNS…TGTT. The segment covering 521 to 534 has biased composition (low complexity); that stretch reads SPGSRASSTGGTSA. Residues 537–549 show a composition bias toward basic and acidic residues; the sequence is VKMEPEGSSDEHP. Polar residues-rich tracts occupy residues 562-578, 634-645, and 706-716; these read PLTT…NTDG, FTSTSSPSNGDS, and TESSTAGAQIP. Pro residues predominate over residues 947 to 963; that stretch reads TPTPTPTPTPTPTPTPT. Polar residues predominate over residues 971-1009; sequence GSQSLSRESPCSRLAQTTPVDSALGSSRHTPIGTPHSNC.

It belongs to the RFX family. As to quaternary structure, interacts (via PxLPxI/L motif) with RFXANK (via ankyrin repeats). Interacts (via PxLPxI/L motif) with ANKRA2 (via ankyrin repeats). As to expression, expressed in spleen and lymph node and to a lower extend in brain (at protein level). Expressed in lymphoid organs and lymphoid cell subsets. Expressed throughout natural killer (NK) cell maturation.

The protein localises to the nucleus. Its function is as follows. Transcription factor. Acts as a transcriptional activator by binding to promoter regions of target genes, such as Rec8, Mxd4 and Ddit4. Plays a role in natural killer (NK) cell maintenance and immunity. May play a role in the process of ciliogenesis in the neural tube and neural tube closure. The sequence is that of DNA-binding protein RFX7 from Mus musculus (Mouse).